Reading from the N-terminus, the 151-residue chain is UPF0179 protein MJ1627 (151 aa).

This sequence belongs to the UPF0179 family.

The sequence is that of UPF0179 protein MJ1627 from Methanocaldococcus jannaschii (strain ATCC 43067 / DSM 2661 / JAL-1 / JCM 10045 / NBRC 100440) (Methanococcus jannaschii).